An 84-amino-acid chain; its full sequence is Putative membrane protein insertion efficiency factor (84 aa).

This sequence belongs to the UPF0161 family.

The protein localises to the cell inner membrane. Could be involved in insertion of integral membrane proteins into the membrane. The chain is Putative membrane protein insertion efficiency factor from Shewanella sp. (strain ANA-3).